A 526-amino-acid polypeptide reads, in one-letter code: Efflux pump aunC (526 aa).

Transmembrane regions (helical) follow at residues 23 to 43, 64 to 84, 89 to 109, 125 to 145, 155 to 175, 183 to 203, 218 to 238, 254 to 274, 296 to 316, 339 to 359, 360 to 380, 386 to 406, 418 to 438, and 491 to 511; these read LCYK…CTSL, DVGW…LPFG, FFPI…GSFI, VAGL…TQCV, GFIM…GGAF, WCFY…FFTF, AAGL…CLLL, IIAL…LQLW, LYGF…PIWF, VIFA…GPFM, LLSA…HPSS, IGYQ…PVFV, TATA…VSVA, and VHTF…ATVI.

It belongs to the major facilitator superfamily. TCR/Tet family.

Its subcellular location is the cell membrane. In terms of biological role, efflux pump; part of the gene cluster that mediates the biosynthesis of aurasperone B, a dimeric gamma-naphthopyrone. This chain is Efflux pump aunC, found in Aspergillus niger (strain ATCC 1015 / CBS 113.46 / FGSC A1144 / LSHB Ac4 / NCTC 3858a / NRRL 328 / USDA 3528.7).